The following is a 551-amino-acid chain: Glucans biosynthesis protein D (551 aa).

Positions 1-32 form a signal peptide, tat-type signal; sequence MNRRRFIKASLALAAACGTPGLATLFSRNAWA.

Belongs to the OpgD/OpgG family. Post-translationally, predicted to be exported by the Tat system. The position of the signal peptide cleavage has not been experimentally proven.

It is found in the periplasm. It participates in glycan metabolism; osmoregulated periplasmic glucan (OPG) biosynthesis. Its function is as follows. Probably involved in the control of the structural glucose backbone of osmoregulated periplasmic glucans (OPGs). This Cronobacter sakazakii (strain ATCC BAA-894) (Enterobacter sakazakii) protein is Glucans biosynthesis protein D.